The following is a 185-amino-acid chain: Elongation factor P (185 aa).

It belongs to the elongation factor P family.

It is found in the cytoplasm. It functions in the pathway protein biosynthesis; polypeptide chain elongation. Its function is as follows. Involved in peptide bond synthesis. Stimulates efficient translation and peptide-bond synthesis on native or reconstituted 70S ribosomes in vitro. Probably functions indirectly by altering the affinity of the ribosome for aminoacyl-tRNA, thus increasing their reactivity as acceptors for peptidyl transferase. The protein is Elongation factor P of Mesomycoplasma hyopneumoniae (strain 232) (Mycoplasma hyopneumoniae).